A 131-amino-acid chain; its full sequence is D-ribose pyranase (131 aa).

The active-site Proton donor is H20. Substrate is bound by residues D28, H98, and 120–122 (YAN).

This sequence belongs to the RbsD / FucU family. RbsD subfamily. In terms of assembly, homodecamer.

It is found in the cytoplasm. The enzyme catalyses beta-D-ribopyranose = beta-D-ribofuranose. Its pathway is carbohydrate metabolism; D-ribose degradation; D-ribose 5-phosphate from beta-D-ribopyranose: step 1/2. In terms of biological role, catalyzes the interconversion of beta-pyran and beta-furan forms of D-ribose. The sequence is that of D-ribose pyranase from Bacillus licheniformis (strain ATCC 14580 / DSM 13 / JCM 2505 / CCUG 7422 / NBRC 12200 / NCIMB 9375 / NCTC 10341 / NRRL NRS-1264 / Gibson 46).